We begin with the raw amino-acid sequence, 245 residues long: tRNA pseudouridine synthase A (245 aa).

Asp52 acts as the Nucleophile in catalysis. Tyr111 lines the substrate pocket.

Belongs to the tRNA pseudouridine synthase TruA family. In terms of assembly, homodimer.

The catalysed reaction is uridine(38/39/40) in tRNA = pseudouridine(38/39/40) in tRNA. Formation of pseudouridine at positions 38, 39 and 40 in the anticodon stem and loop of transfer RNAs. This chain is tRNA pseudouridine synthase A, found in Bradyrhizobium diazoefficiens (strain JCM 10833 / BCRC 13528 / IAM 13628 / NBRC 14792 / USDA 110).